A 529-amino-acid polypeptide reads, in one-letter code: MSSGLIYISLEVLVACLITALIMYYVMKKIYYARGQAALKSASAKAKLMEFQAKSFVEAEEVRMKSQECKLQQQYENKNLQLKTHFEKKEVHLKHLEAQHKEFVRDEKRYLEKEKKELEKERQILEQEKENFKKQRVVCKEAQAKALDAMLNYMAYTKDEIKNMILEQLEEELEAQKSALIRRYEKEAKEEGKKKSYAILAEATARFAGNYATENLTTRIALPCSDYIGRVIGKDGKNIEAFKKVSGVDIEFSEDSSELCLSSFNLYRREVASETLKILIEDGRIQPNRIEEVYHRVARNLEKELLSEGESVVLELELGAMEDELKILIGKMRYRSSFGQNALQHSKEVALLAGLIAEQLGGDKKLARRAGILHDIGKALTQELGRDHVNLGVEVCKRHKEDPVVINAIYAHHGHEEILSVECASVCAADALSAGRPGARRKSDEEYAKRMQALEEIALEFDGVEKAYAMESGRELRVIVKSNQVRDNQVPIIARKIAKKIEESAQYVGEVGVQVVRENRFKTTATLKQ.

Residues 4-24 (GLIYISLEVLVACLITALIMY) traverse the membrane as a helical segment. One can recognise a KH domain in the interval 216-297 (LTTRIALPCS…NRIEEVYHRV (82 aa)). The region spanning 342–435 (ALQHSKEVAL…VCAADALSAG (94 aa)) is the HD domain.

The protein belongs to the RNase Y family.

It is found in the cell membrane. Endoribonuclease that initiates mRNA decay. The sequence is that of Ribonuclease Y from Helicobacter pylori (strain HPAG1).